The sequence spans 449 residues: 23S rRNA (uracil(1939)-C(5))-methyltransferase RlmD (449 aa).

A TRAM domain is found at 1 to 66 (MGRSRHHNKL…AKFDEAKVVE (66 aa)). Positions 79, 85, 88, and 169 each coordinate [4Fe-4S] cluster. 6 residues coordinate S-adenosyl-L-methionine: Gln280, Phe309, Asn314, Glu330, Asn357, and Asp379. Cys405 functions as the Nucleophile in the catalytic mechanism.

This sequence belongs to the class I-like SAM-binding methyltransferase superfamily. RNA M5U methyltransferase family. RlmD subfamily.

It catalyses the reaction uridine(1939) in 23S rRNA + S-adenosyl-L-methionine = 5-methyluridine(1939) in 23S rRNA + S-adenosyl-L-homocysteine + H(+). In terms of biological role, catalyzes the formation of 5-methyl-uridine at position 1939 (m5U1939) in 23S rRNA. The chain is 23S rRNA (uracil(1939)-C(5))-methyltransferase RlmD from Francisella tularensis subsp. tularensis (strain FSC 198).